We begin with the raw amino-acid sequence, 190 residues long: MKVIVGLGNPGREYENTRHNVGWWLIDTLKERWHFEPWRKDGDAVSTTGLVGTKKVKLVKPQTYMNLSGSVLRPYLKREGWTAAQDLMVLVDEVAVPVGEYRLRAAGSPGGHNGLKSIEAHLKSPTYPRLRVGIKPVDERRQIGDLADFVLHTMPRDERALVDDITPRMIDAIELWIAEGTEKAVSSMGR.

Position 14 (tyrosine 14) interacts with tRNA. Catalysis depends on histidine 19, which acts as the Proton acceptor. TRNA contacts are provided by tyrosine 64, asparagine 66, and asparagine 113.

Belongs to the PTH family. In terms of assembly, monomer.

It localises to the cytoplasm. The catalysed reaction is an N-acyl-L-alpha-aminoacyl-tRNA + H2O = an N-acyl-L-amino acid + a tRNA + H(+). Hydrolyzes ribosome-free peptidyl-tRNAs (with 1 or more amino acids incorporated), which drop off the ribosome during protein synthesis, or as a result of ribosome stalling. Functionally, catalyzes the release of premature peptidyl moieties from peptidyl-tRNA molecules trapped in stalled 50S ribosomal subunits, and thus maintains levels of free tRNAs and 50S ribosomes. This Gemmatimonas aurantiaca (strain DSM 14586 / JCM 11422 / NBRC 100505 / T-27) protein is Peptidyl-tRNA hydrolase.